The following is a 448-amino-acid chain: ATP-dependent protease ATPase subunit HslU (448 aa).

Residues I18, 60 to 65, D261, E326, and R398 each bind ATP; that span reads GVGKTE.

It belongs to the ClpX chaperone family. HslU subfamily. As to quaternary structure, a double ring-shaped homohexamer of HslV is capped on each side by a ring-shaped HslU homohexamer. The assembly of the HslU/HslV complex is dependent on binding of ATP.

The protein resides in the cytoplasm. Functionally, ATPase subunit of a proteasome-like degradation complex; this subunit has chaperone activity. The binding of ATP and its subsequent hydrolysis by HslU are essential for unfolding of protein substrates subsequently hydrolyzed by HslV. HslU recognizes the N-terminal part of its protein substrates and unfolds these before they are guided to HslV for hydrolysis. This Paraburkholderia xenovorans (strain LB400) protein is ATP-dependent protease ATPase subunit HslU.